The sequence spans 167 residues: CGG triplet repeat-binding protein 1 (167 aa).

Position 56 is a phosphoserine (Ser-56). The tract at residues 65–86 (KTHTKRKAEFEEQNVRKKQRPL) is disordered. The Nuclear localization signal signature appears at 80–84 (RKKQR). Phosphoserine is present on Ser-164.

Its subcellular location is the nucleus. In terms of biological role, binds to nonmethylated 5'-d(CGG)(n)-3' trinucleotide repeats in the FMR1 promoter. May play a role in regulating FMR1 promoter. The sequence is that of CGG triplet repeat-binding protein 1 (Cggbp1) from Mus musculus (Mouse).